Here is a 274-residue protein sequence, read N- to C-terminus: Large ribosomal subunit protein uL2 (274 aa).

Positions 221–274 are disordered; sequence RGTAMNPVDHPHGGGEGRNFGKHPVTPWGVQTKGKKTRSNKRTDKFIVRRRSKK.

It belongs to the universal ribosomal protein uL2 family. Part of the 50S ribosomal subunit. Forms a bridge to the 30S subunit in the 70S ribosome.

Functionally, one of the primary rRNA binding proteins. Required for association of the 30S and 50S subunits to form the 70S ribosome, for tRNA binding and peptide bond formation. It has been suggested to have peptidyltransferase activity; this is somewhat controversial. Makes several contacts with the 16S rRNA in the 70S ribosome. This chain is Large ribosomal subunit protein uL2, found in Yersinia enterocolitica.